A 203-amino-acid chain; its full sequence is Small ribosomal subunit protein uS4 (203 aa).

One can recognise an S4 RNA-binding domain in the interval 93–156 (RRLDNVVYRL…LKVPAILEAV (64 aa)).

This sequence belongs to the universal ribosomal protein uS4 family. In terms of assembly, part of the 30S ribosomal subunit. Contacts protein S5. The interaction surface between S4 and S5 is involved in control of translational fidelity.

Functionally, one of the primary rRNA binding proteins, it binds directly to 16S rRNA where it nucleates assembly of the body of the 30S subunit. In terms of biological role, with S5 and S12 plays an important role in translational accuracy. The sequence is that of Small ribosomal subunit protein uS4 from Streptococcus gordonii (strain Challis / ATCC 35105 / BCRC 15272 / CH1 / DL1 / V288).